Consider the following 362-residue polypeptide: S-adenosylmethionine:tRNA ribosyltransferase-isomerase (362 aa).

It belongs to the QueA family. As to quaternary structure, monomer.

It is found in the cytoplasm. It carries out the reaction 7-aminomethyl-7-carbaguanosine(34) in tRNA + S-adenosyl-L-methionine = epoxyqueuosine(34) in tRNA + adenine + L-methionine + 2 H(+). The protein operates within tRNA modification; tRNA-queuosine biosynthesis. Functionally, transfers and isomerizes the ribose moiety from AdoMet to the 7-aminomethyl group of 7-deazaguanine (preQ1-tRNA) to give epoxyqueuosine (oQ-tRNA). This is S-adenosylmethionine:tRNA ribosyltransferase-isomerase from Syntrophus aciditrophicus (strain SB).